A 187-amino-acid chain; its full sequence is UPF0167 protein MT2352 (187 aa).

This sequence belongs to the UPF0167 family.

This Mycobacterium tuberculosis (strain CDC 1551 / Oshkosh) protein is UPF0167 protein MT2352.